A 157-amino-acid chain; its full sequence is Protein Smg homolog (157 aa).

This sequence belongs to the Smg family.

The chain is Protein Smg homolog from Xylella fastidiosa (strain M23).